The chain runs to 178 residues: Large ribosomal subunit protein bL25 (178 aa).

It belongs to the bacterial ribosomal protein bL25 family. CTC subfamily. Part of the 50S ribosomal subunit; part of the 5S rRNA/L5/L18/L25 subcomplex. Contacts the 5S rRNA. Binds to the 5S rRNA independently of L5 and L18.

This is one of the proteins that binds to the 5S RNA in the ribosome where it forms part of the central protuberance. This chain is Large ribosomal subunit protein bL25, found in Campylobacter hominis (strain ATCC BAA-381 / DSM 21671 / CCUG 45161 / LMG 19568 / NCTC 13146 / CH001A).